We begin with the raw amino-acid sequence, 267 residues long: Diphthine--ammonia ligase (267 aa).

Residue Tyr97 is modified to Phosphotyrosine.

The protein belongs to the Diphthine--ammonia ligase family.

It catalyses the reaction diphthine-[translation elongation factor 2] + NH4(+) + ATP = diphthamide-[translation elongation factor 2] + AMP + diphosphate + H(+). It functions in the pathway protein modification; peptidyl-diphthamide biosynthesis. Amidase that may catalyze the last step of diphthamide biosynthesis using ammonium and ATP. Diphthamide biosynthesis consists in the conversion of an L-histidine residue in the translation elongation factor (EEF2) to diphthamide. The polypeptide is Diphthine--ammonia ligase (Homo sapiens (Human)).